The following is a 726-amino-acid chain: Ribonuclease R (726 aa).

One can recognise an RNB domain in the interval 264-592; the sequence is RKDLTELAFV…TVHRLLWMNL (329 aa). Residues 645-726 form the S1 motif domain; sequence GQTFHGFISA…VQKRAILTLV (82 aa).

This sequence belongs to the RNR ribonuclease family. RNase R subfamily.

It is found in the cytoplasm. It catalyses the reaction Exonucleolytic cleavage in the 3'- to 5'-direction to yield nucleoside 5'-phosphates.. 3'-5' exoribonuclease that releases 5'-nucleoside monophosphates and is involved in maturation of structured RNAs. This chain is Ribonuclease R, found in Mycoplasma pneumoniae (strain ATCC 29342 / M129 / Subtype 1) (Mycoplasmoides pneumoniae).